The primary structure comprises 35 residues: Photosystem II reaction center protein M (35 aa).

The chain crosses the membrane as a helical span at residues isoleucine 5–isoleucine 25.

Belongs to the PsbM family. PSII is composed of 1 copy each of membrane proteins PsbA, PsbB, PsbC, PsbD, PsbE, PsbF, PsbH, PsbI, PsbJ, PsbK, PsbL, PsbM, PsbT, PsbX, PsbY, PsbZ, Psb30/Ycf12, at least 3 peripheral proteins of the oxygen-evolving complex and a large number of cofactors. It forms dimeric complexes.

The protein localises to the plastid. It localises to the chloroplast thylakoid membrane. Functionally, one of the components of the core complex of photosystem II (PSII). PSII is a light-driven water:plastoquinone oxidoreductase that uses light energy to abstract electrons from H(2)O, generating O(2) and a proton gradient subsequently used for ATP formation. It consists of a core antenna complex that captures photons, and an electron transfer chain that converts photonic excitation into a charge separation. This subunit is found at the monomer-monomer interface. In Panax quinquefolius (American ginseng), this protein is Photosystem II reaction center protein M.